A 54-amino-acid chain; its full sequence is Large ribosomal subunit protein bL33A (54 aa).

It belongs to the bacterial ribosomal protein bL33 family.

The sequence is that of Large ribosomal subunit protein bL33A from Streptomyces avermitilis (strain ATCC 31267 / DSM 46492 / JCM 5070 / NBRC 14893 / NCIMB 12804 / NRRL 8165 / MA-4680).